Consider the following 158-residue polypeptide: Endoribonuclease YbeY (158 aa).

H124, H128, and H134 together coordinate Zn(2+).

Belongs to the endoribonuclease YbeY family. Requires Zn(2+) as cofactor.

It localises to the cytoplasm. Functionally, single strand-specific metallo-endoribonuclease involved in late-stage 70S ribosome quality control and in maturation of the 3' terminus of the 16S rRNA. This Latilactobacillus sakei subsp. sakei (strain 23K) (Lactobacillus sakei subsp. sakei) protein is Endoribonuclease YbeY.